The following is a 479-amino-acid chain: Aspartyl/glutamyl-tRNA(Asn/Gln) amidotransferase subunit B (479 aa).

The protein belongs to the GatB/GatE family. GatB subfamily. Heterotrimer of A, B and C subunits.

The enzyme catalyses L-glutamyl-tRNA(Gln) + L-glutamine + ATP + H2O = L-glutaminyl-tRNA(Gln) + L-glutamate + ADP + phosphate + H(+). The catalysed reaction is L-aspartyl-tRNA(Asn) + L-glutamine + ATP + H2O = L-asparaginyl-tRNA(Asn) + L-glutamate + ADP + phosphate + 2 H(+). Its function is as follows. Allows the formation of correctly charged Asn-tRNA(Asn) or Gln-tRNA(Gln) through the transamidation of misacylated Asp-tRNA(Asn) or Glu-tRNA(Gln) in organisms which lack either or both of asparaginyl-tRNA or glutaminyl-tRNA synthetases. The reaction takes place in the presence of glutamine and ATP through an activated phospho-Asp-tRNA(Asn) or phospho-Glu-tRNA(Gln). In Streptococcus suis (strain 98HAH33), this protein is Aspartyl/glutamyl-tRNA(Asn/Gln) amidotransferase subunit B.